The primary structure comprises 151 residues: MATLESRLADMLKVPVEALGFQLWGIEYVQAGKHSILRVFIDGENGINIEDCANVSRQVSAVLDVEDPISTEYTLEVSSPGVDRPLFTAEQYAAYVGEDVKLQLTMPVAGSRNLKGAITQVDGQMLSLNVNGKELVVALDNIRKGNIIAKF.

Belongs to the RimP family.

The protein localises to the cytoplasm. Required for maturation of 30S ribosomal subunits. The chain is Ribosome maturation factor RimP from Shewanella sp. (strain ANA-3).